A 127-amino-acid polypeptide reads, in one-letter code: V-type proton ATPase subunit F (127 aa).

The protein belongs to the V-ATPase F subunit family. In terms of assembly, V-ATPase is a heteromultimeric enzyme made up of two complexes: the ATP-hydrolytic V1 complex and the proton translocation V0 complex. The V1 complex consists of three catalytic AB heterodimers that form a heterohexamer, three peripheral stalks each consisting of EG heterodimers, one central rotor including subunits D and F, and the regulatory subunits C and H. The proton translocation complex V0 consists of the proton transport subunit a, a ring of proteolipid subunits c9c'', rotary subunit d, subunits e and f, and the accessory subunits VhaAC45 and ATP6AP2.

In terms of biological role, subunit of the V1 complex of vacuolar(H+)-ATPase (V-ATPase), a multisubunit enzyme composed of a peripheral complex (V1) that hydrolyzes ATP and a membrane integral complex (V0) that translocates protons. V-ATPase is responsible for acidifying and maintaining the pH of intracellular compartments and in some cell types, is targeted to the plasma membrane, where it is responsible for acidifying the extracellular environment. In Aedes aegypti (Yellowfever mosquito), this protein is V-type proton ATPase subunit F.